The primary structure comprises 1061 residues: Bifunctional cytochrome P450/NADPH--P450 reductase 1 (1061 aa).

Residues 1–475 form a cytochrome P450 region; sequence MKETSPIPQP…AEKAAPDEQK (475 aa). Cys403 serves as a coordination point for heme. Positions 476-1061 are NADPH--P450 reductase; that stretch reads EKTEAKGASV…MYAKDVWAGI (586 aa). Residues 493-632 enclose the Flavodoxin-like domain; sequence LLVLYGSDTG…QLDEWKKSMW (140 aa). FMN contacts are provided by residues 499–504, 546–549, 580–582, and 588–590; these read SDTGTA, SYNG, CGD, and TYQ. In terms of domain architecture, FAD-binding FR-type spans 671-904; that stretch reads YEASHASIAE…RTPESRFQLP (234 aa).

In the N-terminal section; belongs to the cytochrome P450 family. It depends on FAD as a cofactor. Requires FMN as cofactor. Heme b is required as a cofactor.

It localises to the cytoplasm. The enzyme catalyses an organic molecule + reduced [NADPH--hemoprotein reductase] + O2 = an alcohol + oxidized [NADPH--hemoprotein reductase] + H2O + H(+). The catalysed reaction is 2 oxidized [cytochrome P450] + NADPH = 2 reduced [cytochrome P450] + NADP(+) + H(+). Functions as a fatty acid monooxygenase. Catalyzes hydroxylation of a range of long-chain fatty acids, with a preference for long-chain unsaturated and branched-chain fatty acids over saturated fatty acids. Hydroxylation of myristic acid occurs mainly at the omega-2 position. Also displays a NADPH-dependent reductase activity in the C-terminal domain, which allows electron transfer from NADPH to the heme iron of the cytochrome P450 N-terminal domain. Is also able to catalyze efficient oxidation of sodium dodecyl sulfate (SDS). This chain is Bifunctional cytochrome P450/NADPH--P450 reductase 1, found in Bacillus subtilis (strain 168).